The following is a 354-amino-acid chain: MGKLVALVLLGVGLSLVGEMFLAFRERVNASREVEPVEPENCHLIEELESGSEDIDILPSGLAFISSGLKYPGMPNFAPDEPGKIFLMDLNEQNPRAQALEISGGFDKELFNPHGISIFIDKDNTVYLYVVNHPHMKSTVEIFKFEEQQRSLVYLKTIKHELLKSVNDIVVLGPEQFYATRDHYFTNSLLSFFEMILDLRWTYVLFYSPREVKVVAKGFCSANGITVSADQKYVYVADVAAKNIHIMEKHDNWDLTQLKVIQLGTLVDNLTVDPATGDILAGCHPNPMKLLNYNPEDPPGSEVLRIQNVLSEKPRVSTVYANNGSVLQGTSVASVYHGKILIGTVFHKTLYCEL.

Asn29 carries an N-linked (GlcNAc...) asparagine glycan. A disulfide bond links Cys42 and Cys352. Residues Glu53 and Asp54 each contribute to the Ca(2+) site. His114 functions as the Proton acceptor in the catalytic mechanism. Ca(2+) is bound at residue Ile116. At Ser165 the chain carries Phosphoserine. The Ca(2+) site is built by Asn167, Asp168, Asn223, Asp268, and Asn269. Residues Asn269 and Asn323 are each glycosylated (N-linked (GlcNAc...) asparagine).

The protein belongs to the paraoxonase family. Homodimer. The cofactor is Ca(2+). In terms of processing, the signal sequence is not cleaved.

Its subcellular location is the secreted. It localises to the extracellular space. The enzyme catalyses a phenyl acetate + H2O = a phenol + acetate + H(+). It catalyses the reaction An aryl dialkyl phosphate + H2O = dialkyl phosphate + an aryl alcohol.. It carries out the reaction an N-acyl-L-homoserine lactone + H2O = an N-acyl-L-homoserine + H(+). Has low activity towards the organophosphate paraxon and aromatic carboxylic acid esters. Rapidly hydrolyzes lactones such as statin prodrugs (e.g. lovastatin). Hydrolyzes aromatic lactones and 5- or 6-member ring lactones with aliphatic substituents but not simple lactones or those with polar substituents. The sequence is that of Serum paraoxonase/lactonase 3 (PON3) from Homo sapiens (Human).